The chain runs to 156 residues: Snaclec A15 (156 aa).

Positions 1-23 (MGRFIFVRFGLLVVFLSLSGTGA) are cleaved as a signal peptide. Intrachain disulfides connect cysteine 27-cysteine 38, cysteine 55-cysteine 152, and cysteine 127-cysteine 144. Residues 34–153 (YDQHCYKAFD…CGDDYPFVCK (120 aa)) form the C-type lectin domain. Asparagine 141 carries an N-linked (GlcNAc...) asparagine glycan.

This sequence belongs to the snaclec family. As to quaternary structure, heterodimer; disulfide-linked. In terms of tissue distribution, expressed by the venom gland.

It localises to the secreted. Its function is as follows. Interferes with one step of hemostasis (modulation of platelet aggregation, or coagulation cascade, for example). In Macrovipera lebetinus (Levantine viper), this protein is Snaclec A15.